A 121-amino-acid chain; its full sequence is uncharacterized protein (121 aa).

Positions 7–121 (IFCKIVRGEV…GGREMSWPPG (115 aa)) constitute an HIT domain. The short motif at 105–109 (HLHLH) is the Histidine triad motif element.

This is an uncharacterized protein from Aquifex aeolicus (strain VF5).